The primary structure comprises 310 residues: MFQHTTVLLKEAVDGLHIKPDGIYVDCTLGGGGHSEYLLSQLSEDGRLFAFDQDDMAIEYAKKRLARYEKQVTFIRRNFRFLAEELTARGVHRVDGILFDLGVSSPQLDTPERGFSYHHDAPLDMRMNREQSLTAYDIVNHWPYEELVHIFFHYGEEKFSKQVARKIEEVRKEKRIETTGQLVDIIKEAIPAPARRSGGHPAKRIFQAIRIAVNDELQAFKEAITQAIDLLKSGGRISVITFHSLEDRICKVAFKEASQGPQLPPGLPLIPDQYRPALKIITKKPIVPSEEEIEHNHRARSAKLRIAEKL.

S-adenosyl-L-methionine is bound by residues 32–34 (GGH), aspartate 52, alanine 83, aspartate 100, and glutamine 107.

Belongs to the methyltransferase superfamily. RsmH family.

It is found in the cytoplasm. The enzyme catalyses cytidine(1402) in 16S rRNA + S-adenosyl-L-methionine = N(4)-methylcytidine(1402) in 16S rRNA + S-adenosyl-L-homocysteine + H(+). Specifically methylates the N4 position of cytidine in position 1402 (C1402) of 16S rRNA. The chain is Ribosomal RNA small subunit methyltransferase H from Geobacillus sp. (strain WCH70).